The chain runs to 400 residues: 3-hydroxybenzoate 6-hydroxylase (400 aa).

It belongs to the 3-hydroxybenzoate 6-hydroxylase family. As to quaternary structure, monomer. The cofactor is FAD.

It carries out the reaction 3-hydroxybenzoate + NADH + O2 + H(+) = 2,5-dihydroxybenzoate + NAD(+) + H2O. Its function is as follows. Catalyzes the NAD- or NADP-dependent conversion of 3-hydroxybenzoate to gentisate. The affinity of the enzyme toward NAD is twice as high as for NADP. This chain is 3-hydroxybenzoate 6-hydroxylase (nagX), found in Polaromonas naphthalenivorans (strain CJ2).